The chain runs to 156 residues: MASRVLCACVRRLPAAFAPLPRLPTLALARPLSTTLCPEGIRRRPGALQSALALAQVPGTVTHLCRQYSDAPPLTLDGIKDRVLYVLKLYDKIDPEKLSVNSHFMKDLGLDSLDQVEIIMAMEDEFGFEIPDIDAEKLMCPQEIVDYIADKKDVYE.

Residues 1 to 68 constitute a mitochondrion transit peptide; it reads MASRVLCACV…GTVTHLCRQY (68 aa). The Carrier domain maps to 77-152; that stretch reads DGIKDRVLYV…EIVDYIADKK (76 aa). N6-acetyllysine is present on lysine 88. Residue serine 112 is modified to O-(pantetheine 4'-phosphoryl)serine.

This sequence belongs to the acyl carrier protein (ACP) family. In terms of assembly, mammalian complex I is composed of 45 different subunits. Interacts with ETFRF1. Identified in a complex composed of MALSU1, MIEF1 upstream open reading frame protein and NDUFAB1; within the trimeric complex, MIEF1 upstream open reading frame protein functions as a bridging scaffold that interacts with MALSU1 on one side, and with NDUFAB1 on the other side. The complex interacts with the mitochondrial large ribosomal subunit. Interacts with alpha-1-microglobulin chain; this interaction is required for the maintenance of mitochondrial redox homeostasis. Component of the mitochondrial core iron-sulfur cluster (ISC) complex composed of NFS1, LYRM4, NDUFAB1, ISCU, FXN, and FDX2; this complex is a heterohexamer containing two copies of each monomer. Component of the cyteine desulfurase complex composed of NFS1, LYRM4 and NDUFAB1; this complex contributes to the stability and cysteine desulfurase activity of NFS1. Phosphopantetheinylation at Ser-112 is essential for interactions with LYR motif-containing proteins.

The protein resides in the mitochondrion. Its function is as follows. Carrier of the growing fatty acid chain in fatty acid biosynthesis. Accessory and non-catalytic subunit of the mitochondrial membrane respiratory chain NADH dehydrogenase (Complex I), which functions in the transfer of electrons from NADH to the respiratory chain. Accessory protein, of the core iron-sulfur cluster (ISC) assembly complex, that regulates, in association with LYRM4, the stability and the cysteine desulfurase activity of NFS1 and participates in the [2Fe-2S] clusters assembly on the scaffolding protein ISCU. The core iron-sulfur cluster (ISC) assembly complex is involved in the de novo synthesis of a [2Fe-2S] cluster, the first step of the mitochondrial iron-sulfur protein biogenesis. This process is initiated by the cysteine desulfurase complex (NFS1:LYRM4:NDUFAB1) that produces persulfide which is delivered on the scaffold protein ISCU in a FXN-dependent manner. Then this complex is stabilized by FDX2 which provides reducing equivalents to accomplish the [2Fe-2S] cluster assembly. Finally, the [2Fe-2S] cluster is transferred from ISCU to chaperone proteins, including HSCB, HSPA9 and GLRX5. The chain is Acyl carrier protein, mitochondrial from Mus musculus (Mouse).